The sequence spans 595 residues: uncharacterized protein (595 aa).

3 disordered regions span residues 50-159 (VNPS…KTKK), 398-430 (TYPT…PPSL), and 450-595 (VTEG…SLDK). The span at 83-122 (SNKSSALKKSNKSSNKSSNKSSNKSSNKSSNKSSNKSSNK) shows a compositional bias: low complexity. A compositionally biased stretch (basic and acidic residues) spans 123 to 132 (FPDKSDKSDS). Residues 137–146 (DNSDDSDDSS) show a composition bias toward acidic residues. Residues 398 to 409 (TYPTTPLFSEPT) are compositionally biased toward low complexity. Residues 410–420 (IPKPPQQPTTE) are compositionally biased toward pro residues. Positions 421-430 (PPSGFKPPSL) are enriched in low complexity. Basic and acidic residues predominate over residues 454–463 (KVVESDDHTS). The segment covering 467–476 (IPPPPPPPPS) has biased composition (pro residues). Low complexity predominate over residues 477-529 (ISSDNSSPNKSVKSSTKSSTKSSTKSSTKSSTKSSTKSPSKTPVKSPIKSSSK). Residues 530–542 (LSDKKSPTKKIES) are compositionally biased toward basic and acidic residues. A compositionally biased stretch (acidic residues) spans 544 to 553 (GESDSESDSE). Over residues 559–570 (TKKSTNKIKKIT) the composition is skewed to basic residues. Over residues 571–580 (NNKLENSNTK) the composition is skewed to low complexity. The segment covering 581-595 (NNKKFSKKKTISLDK) has biased composition (basic residues).

This is an uncharacterized protein from Acanthamoeba polyphaga mimivirus (APMV).